Here is a 283-residue protein sequence, read N- to C-terminus: Polyamine aminopropyltransferase (283 aa).

One can recognise a PABS domain in the interval 3-236; that stretch reads GIWFSELQTP…GLWAFSLGSK (234 aa). Q32 serves as a coordination point for S-methyl-5'-thioadenosine. Spermidine contacts are provided by H63 and D87. Residues E107 and 138 to 139 contribute to the S-methyl-5'-thioadenosine site; that span reads DG. D156 functions as the Proton acceptor in the catalytic mechanism. Residue 156–159 participates in spermidine binding; it reads DSTD. P163 contributes to the S-methyl-5'-thioadenosine binding site.

The protein belongs to the spermidine/spermine synthase family. Homodimer or homotetramer.

The protein localises to the cytoplasm. The enzyme catalyses S-adenosyl 3-(methylsulfanyl)propylamine + putrescine = S-methyl-5'-thioadenosine + spermidine + H(+). The protein operates within amine and polyamine biosynthesis; spermidine biosynthesis; spermidine from putrescine: step 1/1. Its function is as follows. Catalyzes the irreversible transfer of a propylamine group from the amino donor S-adenosylmethioninamine (decarboxy-AdoMet) to putrescine (1,4-diaminobutane) to yield spermidine. This Moorella thermoacetica (strain ATCC 39073 / JCM 9320) protein is Polyamine aminopropyltransferase.